Here is a 438-residue protein sequence, read N- to C-terminus: uncharacterized protein (438 aa).

Histidine 59 provides a ligand contact to Zn(2+). Glutamate 62 acts as the Proton acceptor in catalysis. Zn(2+) contacts are provided by histidine 63 and glutamate 139.

This sequence belongs to the peptidase M16 family. Zn(2+) is required as a cofactor.

This is an uncharacterized protein from Mycobacterium tuberculosis (strain CDC 1551 / Oshkosh).